A 433-amino-acid polypeptide reads, in one-letter code: 3-phosphoshikimate 1-carboxyvinyltransferase (433 aa).

Lysine 15, serine 16, and arginine 20 together coordinate 3-phosphoshikimate. Lysine 15 lines the phosphoenolpyruvate pocket. Phosphoenolpyruvate-binding residues include glycine 96 and arginine 124. Serine 169, glutamine 171, serine 195, aspartate 318, and lysine 345 together coordinate 3-phosphoshikimate. A phosphoenolpyruvate-binding site is contributed by glutamine 171. Catalysis depends on aspartate 318, which acts as the Proton acceptor. Arginine 349 and arginine 393 together coordinate phosphoenolpyruvate.

This sequence belongs to the EPSP synthase family. In terms of assembly, monomer.

The protein resides in the cytoplasm. It catalyses the reaction 3-phosphoshikimate + phosphoenolpyruvate = 5-O-(1-carboxyvinyl)-3-phosphoshikimate + phosphate. The protein operates within metabolic intermediate biosynthesis; chorismate biosynthesis; chorismate from D-erythrose 4-phosphate and phosphoenolpyruvate: step 6/7. Catalyzes the transfer of the enolpyruvyl moiety of phosphoenolpyruvate (PEP) to the 5-hydroxyl of shikimate-3-phosphate (S3P) to produce enolpyruvyl shikimate-3-phosphate and inorganic phosphate. This Pelodictyon phaeoclathratiforme (strain DSM 5477 / BU-1) protein is 3-phosphoshikimate 1-carboxyvinyltransferase.